Here is a 629-residue protein sequence, read N- to C-terminus: Bifunctional protein ArgHA (629 aa).

The interval 1-499 is argininosuccinate lyase; that stretch reads MALWGGRFSQ…NLPRSRSDLV (499 aa). Positions 464-598 constitute an N-acetyltransferase domain; sequence ISIRAARLTD…EKVLKDCDMC (135 aa). The tract at residues 500-629 is amino-acid acetyltransferase; it reads KAVGTFAVTE…INLKAEKLAS (130 aa).

This sequence in the N-terminal section; belongs to the lyase 1 family. Argininosuccinate lyase subfamily. In the C-terminal section; belongs to the acetyltransferase family. ArgA subfamily.

It localises to the cytoplasm. The enzyme catalyses 2-(N(omega)-L-arginino)succinate = fumarate + L-arginine. It catalyses the reaction L-glutamate + acetyl-CoA = N-acetyl-L-glutamate + CoA + H(+). Its pathway is amino-acid biosynthesis; L-arginine biosynthesis; N(2)-acetyl-L-ornithine from L-glutamate: step 1/4. It functions in the pathway amino-acid biosynthesis; L-arginine biosynthesis; L-arginine from L-ornithine and carbamoyl phosphate: step 3/3. The protein is Bifunctional protein ArgHA (argHA) of Moritella abyssi.